Here is a 368-residue protein sequence, read N- to C-terminus: 4-hydroxy-3-methylbut-2-en-1-yl diphosphate synthase (flavodoxin) (368 aa).

Cys271, Cys274, Cys306, and Glu313 together coordinate [4Fe-4S] cluster.

It belongs to the IspG family. The cofactor is [4Fe-4S] cluster.

It carries out the reaction (2E)-4-hydroxy-3-methylbut-2-enyl diphosphate + oxidized [flavodoxin] + H2O + 2 H(+) = 2-C-methyl-D-erythritol 2,4-cyclic diphosphate + reduced [flavodoxin]. It participates in isoprenoid biosynthesis; isopentenyl diphosphate biosynthesis via DXP pathway; isopentenyl diphosphate from 1-deoxy-D-xylulose 5-phosphate: step 5/6. Converts 2C-methyl-D-erythritol 2,4-cyclodiphosphate (ME-2,4cPP) into 1-hydroxy-2-methyl-2-(E)-butenyl 4-diphosphate. The polypeptide is 4-hydroxy-3-methylbut-2-en-1-yl diphosphate synthase (flavodoxin) (Haemophilus influenzae (strain 86-028NP)).